Here is a 1170-residue protein sequence, read N- to C-terminus: DNA-directed RNA polymerase subunit beta (1170 aa).

Belongs to the RNA polymerase beta chain family. As to quaternary structure, the RNAP catalytic core consists of 2 alpha, 1 beta, 1 beta' and 1 omega subunit. When a sigma factor is associated with the core the holoenzyme is formed, which can initiate transcription.

It catalyses the reaction RNA(n) + a ribonucleoside 5'-triphosphate = RNA(n+1) + diphosphate. Its function is as follows. DNA-dependent RNA polymerase catalyzes the transcription of DNA into RNA using the four ribonucleoside triphosphates as substrates. In Corynebacterium urealyticum (strain ATCC 43042 / DSM 7109), this protein is DNA-directed RNA polymerase subunit beta.